The following is a 95-amino-acid chain: Aspartyl/glutamyl-tRNA(Asn/Gln) amidotransferase subunit C (95 aa).

Belongs to the GatC family. In terms of assembly, heterotrimer of A, B and C subunits.

It catalyses the reaction L-glutamyl-tRNA(Gln) + L-glutamine + ATP + H2O = L-glutaminyl-tRNA(Gln) + L-glutamate + ADP + phosphate + H(+). The enzyme catalyses L-aspartyl-tRNA(Asn) + L-glutamine + ATP + H2O = L-asparaginyl-tRNA(Asn) + L-glutamate + ADP + phosphate + 2 H(+). Allows the formation of correctly charged Asn-tRNA(Asn) or Gln-tRNA(Gln) through the transamidation of misacylated Asp-tRNA(Asn) or Glu-tRNA(Gln) in organisms which lack either or both of asparaginyl-tRNA or glutaminyl-tRNA synthetases. The reaction takes place in the presence of glutamine and ATP through an activated phospho-Asp-tRNA(Asn) or phospho-Glu-tRNA(Gln). The polypeptide is Aspartyl/glutamyl-tRNA(Asn/Gln) amidotransferase subunit C (Dechloromonas aromatica (strain RCB)).